We begin with the raw amino-acid sequence, 132 residues long: Histone H2B.1 (132 aa).

Over residues 1–13 the composition is skewed to low complexity; that stretch reads MSSKASKAPASKA. The interval 1-40 is disordered; sequence MSSKASKAPASKAPAEKKPAAKKTSSSVDASKKRTKTRKE. N6-acetyllysine; alternate is present on Lys-7. Lys-7 is covalently cross-linked (Glycyl lysine isopeptide (Lys-Gly) (interchain with G-Cter in SUMO); alternate). A Phosphoserine modification is found at Ser-11. Lys-12 carries the post-translational modification N6-acetyllysine. Lys-17 carries the post-translational modification N6-acetyllysine; alternate. Residue Lys-17 forms a Glycyl lysine isopeptide (Lys-Gly) (interchain with G-Cter in SUMO); alternate linkage. Lys-18 participates in a covalent cross-link: Glycyl lysine isopeptide (Lys-Gly) (interchain with G-Cter in SUMO). Residue Lys-125 forms a Glycyl lysine isopeptide (Lys-Gly) (interchain with G-Cter in ubiquitin) linkage.

The protein belongs to the histone H2B family. As to quaternary structure, the nucleosome is a histone octamer containing two molecules each of H2A, H2B, H3 and H4 assembled in one H3-H4 heterotetramer and two H2A-H2B heterodimers. The octamer wraps approximately 147 bp of DNA. Post-translationally, monoubiquitinated by the UBC2-BRE1 complex to form H2BK123ub1. H2BK123ub1 gives a specific tag for epigenetic transcriptional activation and is also prerequisite for H3K4me and H3K79me formation. H2BK123ub1 also modulates the formation of double-strand breaks during meiosis and is a prerequisite for DNA-damage checkpoint activation. In terms of processing, phosphorylated by STE20 to form H2BS10ph during progression through meiotic prophase. May be correlated with chromosome condensation. Acetylated by GCN5 to form H2BK11ac and H2BK16ac. H2BK16ac can also be formed by ESA1. Acetylation of N-terminal lysines and particularly formation of H2BK11acK16ac has a positive effect on transcription. Post-translationally, sumoylation to form H2BK6su and probably also H2BK16su or H2BK17su, occurs preferentially near the telomeres and represses gene transcription.

The protein resides in the nucleus. It is found in the chromosome. Its function is as follows. Core component of nucleosome. Nucleosomes wrap and compact DNA into chromatin, limiting DNA accessibility to the cellular machineries which require DNA as a template. Histones thereby play a central role in transcription regulation, DNA repair, DNA replication and chromosomal stability. DNA accessibility is regulated via a complex set of post-translational modifications of histones, also called histone code, and nucleosome remodeling. In Eremothecium gossypii (strain ATCC 10895 / CBS 109.51 / FGSC 9923 / NRRL Y-1056) (Yeast), this protein is Histone H2B.1 (HTB1).